Consider the following 289-residue polypeptide: Protoheme IX farnesyltransferase (289 aa).

Helical transmembrane passes span 18–38 (VTSL…EQSP), 40–60 (GFLI…SFIF), 87–107 (VVQA…VLAV), 111–131 (LLTA…YTIF), 139–159 (NIVI…AAIG), 168–188 (SLFM…AIFL), 212–232 (SIFF…FLES), 234–254 (MGFL…ILSY), and 269–289 (FFFS…DHLI).

The protein belongs to the UbiA prenyltransferase family. Protoheme IX farnesyltransferase subfamily.

It localises to the cell inner membrane. It carries out the reaction heme b + (2E,6E)-farnesyl diphosphate + H2O = Fe(II)-heme o + diphosphate. The protein operates within porphyrin-containing compound metabolism; heme O biosynthesis; heme O from protoheme: step 1/1. Converts heme B (protoheme IX) to heme O by substitution of the vinyl group on carbon 2 of heme B porphyrin ring with a hydroxyethyl farnesyl side group. The chain is Protoheme IX farnesyltransferase from Leptospira interrogans serogroup Icterohaemorrhagiae serovar copenhageni (strain Fiocruz L1-130).